The chain runs to 339 residues: mRNA cap guanine-N(7) methyltransferase 2 (339 aa).

The mRNA cap 0 methyltransferase domain maps to 1–277 (MAVTPHHRLY…LYSTFVFQKP (277 aa)). S-adenosyl-L-methionine-binding positions include Lys-14, Asp-54, and 82-83 (DP). The interval 314-339 (VSRTDILPPADNEKGILGPGPADMRL) is disordered.

It belongs to the class I-like SAM-binding methyltransferase superfamily. mRNA cap 0 methyltransferase family.

The protein localises to the nucleus. It catalyses the reaction a 5'-end (5'-triphosphoguanosine)-ribonucleoside in mRNA + S-adenosyl-L-methionine = a 5'-end (N(7)-methyl 5'-triphosphoguanosine)-ribonucleoside in mRNA + S-adenosyl-L-homocysteine. In terms of biological role, mRNA-capping methyltransferase that methylates the N7 position of the added guanosine to the 5'-cap structure of mRNAs. Binds RNA containing 5'-terminal GpppC. This chain is mRNA cap guanine-N(7) methyltransferase 2, found in Oryza sativa subsp. japonica (Rice).